Reading from the N-terminus, the 261-residue chain is DNA repair protein RecO (261 aa).

The protein belongs to the RecO family.

Involved in DNA repair and RecF pathway recombination. The polypeptide is DNA repair protein RecO (Gloeobacter violaceus (strain ATCC 29082 / PCC 7421)).